A 411-amino-acid polypeptide reads, in one-letter code: MQVYAVGGAIRDELLGKPSQDRDYVVVGATPAQMEAAGYKPVGKDFPVFLHPRTKEEYALARTERKTAMGYKGFAFYCEPDVTLEDDLVRRDLTINAMARAVDADGNLTGPVIDPHGGQRDLAARLFRHVSDAFAEDPVRILRVARFAARFHEFGVAAETMRLMREMVAAGEVDALVPERVWQELARGLMEAKPSRMFEVLRECGALARLLPELERLWGVPQRADYHPEIDTGVHVMMVIDQAAAMGAPLTVRFAALVHDLGKGTTPADVLPRHIGHESRSAQLLEDVCVRLRVPNECRDLALVVAREHGNIHRSQEFSAAAVMRLLERCDALRKPARFAEALQACEADLRGRKGFESSAYPQAARLLAALEAAAAVDAGAIARACGDDVGQIRDRVQAARVAAVAARIGG.

Glycine 8 and arginine 11 together coordinate ATP. Positions 8 and 11 each coordinate CTP. Mg(2+) is bound by residues aspartate 21 and aspartate 23. The ATP site is built by arginine 91, arginine 143, and arginine 146. CTP-binding residues include arginine 91, arginine 143, and arginine 146. An HD domain is found at 232–333; it reads TGVHVMMVID…MRLLERCDAL (102 aa).

The protein belongs to the tRNA nucleotidyltransferase/poly(A) polymerase family. Bacterial CCA-adding enzyme type 1 subfamily. In terms of assembly, monomer. Can also form homodimers and oligomers. Mg(2+) serves as cofactor. Ni(2+) is required as a cofactor.

It carries out the reaction a tRNA precursor + 2 CTP + ATP = a tRNA with a 3' CCA end + 3 diphosphate. The catalysed reaction is a tRNA with a 3' CCA end + 2 CTP + ATP = a tRNA with a 3' CCACCA end + 3 diphosphate. In terms of biological role, catalyzes the addition and repair of the essential 3'-terminal CCA sequence in tRNAs without using a nucleic acid template. Adds these three nucleotides in the order of C, C, and A to the tRNA nucleotide-73, using CTP and ATP as substrates and producing inorganic pyrophosphate. tRNA 3'-terminal CCA addition is required both for tRNA processing and repair. Also involved in tRNA surveillance by mediating tandem CCA addition to generate a CCACCA at the 3' terminus of unstable tRNAs. While stable tRNAs receive only 3'-terminal CCA, unstable tRNAs are marked with CCACCA and rapidly degraded. This Cupriavidus necator (strain ATCC 17699 / DSM 428 / KCTC 22496 / NCIMB 10442 / H16 / Stanier 337) (Ralstonia eutropha) protein is Multifunctional CCA protein.